We begin with the raw amino-acid sequence, 421 residues long: NADH-dependent phenylglyoxylate dehydrogenase subunit epsilon (421 aa).

FAD is bound by residues 15-18 (SSHA), 39-40 (TR), and 279-297 (ATAQ…NAIL).

This sequence belongs to the FAD-dependent oxidoreductase family. As to quaternary structure, dimer of heteropentamers composed of an alpha (PadG), a beta (PadI), a gamma (PadE), a delta (PadF) and an epsilon (PadH) subunit. FAD is required as a cofactor.

It catalyses the reaction phenylglyoxylate + NAD(+) + CoA = benzoyl-CoA + CO2 + NADH. Activated by magnesium ions and thiamine diphosphate. Involved in the anaerobic metabolism of phenylalanine and phenylacetate. Catalyzes the oxidative decarboxylation of phenylglyoxylate to benzoyl-CoA and CO(2). It can also react slowly with 2-oxo-3-methylbutanoate and use different electron acceptors such as benzyl viologen, methyl viologen, FAD or FMN, but NAD seems to be the physiological electron acceptor. Also catalyzes an isotope exchange between CO(2) and the carboxyl group which proves partial or complete reversibility of the oxidative decarboxylation reaction. This chain is NADH-dependent phenylglyoxylate dehydrogenase subunit epsilon (padH), found in Aromatoleum evansii (Azoarcus evansii).